A 282-amino-acid chain; its full sequence is 2,3,4,5-tetrahydropyridine-2,6-dicarboxylate N-succinyltransferase (282 aa).

Residues arginine 109 and aspartate 146 each contribute to the substrate site.

It belongs to the transferase hexapeptide repeat family. In terms of assembly, homotrimer.

It localises to the cytoplasm. It carries out the reaction (S)-2,3,4,5-tetrahydrodipicolinate + succinyl-CoA + H2O = (S)-2-succinylamino-6-oxoheptanedioate + CoA. The protein operates within amino-acid biosynthesis; L-lysine biosynthesis via DAP pathway; LL-2,6-diaminopimelate from (S)-tetrahydrodipicolinate (succinylase route): step 1/3. The sequence is that of 2,3,4,5-tetrahydropyridine-2,6-dicarboxylate N-succinyltransferase from Bartonella henselae (strain ATCC 49882 / DSM 28221 / CCUG 30454 / Houston 1) (Rochalimaea henselae).